A 66-amino-acid polypeptide reads, in one-letter code: Large ribosomal subunit protein uL30 (66 aa).

It belongs to the universal ribosomal protein uL30 family. In terms of assembly, part of the 50S ribosomal subunit.

The protein is Large ribosomal subunit protein uL30 of Azorhizobium caulinodans (strain ATCC 43989 / DSM 5975 / JCM 20966 / LMG 6465 / NBRC 14845 / NCIMB 13405 / ORS 571).